The primary structure comprises 287 residues: Cbb3-type cytochrome c oxidase subunit FixPc (287 aa).

The Cytoplasmic segment spans residues 1–36; the sequence is MSEKHIDEFSGVETTGHEWDGIRELNNPMPRWWVWT. The helical transmembrane segment at 37–57 threads the bilayer; sequence FYATIVWALGYAIAYPAIPMI. At 58–287 the chain is on the periplasmic side; the sequence is TDATKGMLGF…IFVHSLGGGT (230 aa). Cytochrome c domains lie at 108–196 and 203–284; these read FAIA…WGLT and GLAE…HSLG. Heme c is bound by residues C121, C124, H125, M173, C216, C219, H220, and M261.

Belongs to the CcoP / FixP family. As to quaternary structure, component of the cbb3-type cytochrome c oxidase at least composed of FixN, FixO, FixQ and FixP. It depends on heme c as a cofactor.

It localises to the cell inner membrane. It participates in energy metabolism; oxidative phosphorylation. C-type cytochrome. Part of the cbb3-type cytochrome c oxidase complex. FixP subunit is required for transferring electrons from donor cytochrome c via its heme groups to FixO subunit. From there, electrons are shuttled to the catalytic binuclear center of FixN subunit where oxygen reduction takes place. The complex also functions as a proton pump. In Rhizobium leguminosarum bv. viciae, this protein is Cbb3-type cytochrome c oxidase subunit FixPc.